The sequence spans 400 residues: MGFITKAIPLALAAASVINGAEILETRAGVQTLADKYIVVMNDGMTDKDFDSHRSWVNRTHRRRLVRRGAKAMTGMKHTYRFPTGMKGYSGHFDEQMINEIAKRADVKYIERDARVQINAIEMQDNVPSWGLARVGSKEPGGTTYYYDSSAGQGVTAYVIDTGTDIKHEEFSGRATWGGNFVDDIDMDCNGHGTHVSGTVAGTKFGVAKKANVVGVKVLDCDGSGSNSGVIMGMEFATNDAKKKGAGKAVANMSLGGAFSQASNDAAAAIAQGGVFLAVAAGNDNVDAAMASPASEPSICTVAASTEQDGKASFSNYGQVVDVYAPGDGITSAKPGGGSQVLSGTSMASPHVAGLAAYLIGTGKSGGPQLCDTIKNMAIDVITNPGAGTTGKLINNGSGK.

The first 20 residues, 1–20 (MGFITKAIPLALAAASVING), serve as a signal peptide directing secretion. Positions 21-119 (AEILETRAGV…IERDARVQIN (99 aa)) are excised as a propeptide. In terms of domain architecture, Inhibitor I9 spans 36 to 118 (KYIVVMNDGM…YIERDARVQI (83 aa)). The Peptidase S8 domain occupies 129 to 400 (SWGLARVGSK…GKLINNGSGK (272 aa)). Residues Asp161 and His192 each act as charge relay system in the active site. Residue Asn252 is glycosylated (N-linked (GlcNAc...) asparagine). Ser346 serves as the catalytic Charge relay system. N-linked (GlcNAc...) asparagine glycosylation occurs at Asn396.

This sequence belongs to the peptidase S8 family.

The protein resides in the secreted. Its function is as follows. Secreted subtilisin-like serine protease with keratinolytic activity that contributes to pathogenicity. This Arthroderma gypseum (strain ATCC MYA-4604 / CBS 118893) (Microsporum gypseum) protein is Subtilisin-like protease 7 (SUB7).